Reading from the N-terminus, the 447-residue chain is tRNA-2-methylthio-N(6)-dimethylallyladenosine synthase (447 aa).

Residues 3 to 120 (KKLYIKTNGC…LPALLNERLE (118 aa)) form the MTTase N-terminal domain. Residues Cys12, Cys49, Cys83, Cys157, Cys161, and Cys164 each coordinate [4Fe-4S] cluster. In terms of domain architecture, Radical SAM core spans 143–375 (RAEGPTAFVS…QNRLLMNAAR (233 aa)). In terms of domain architecture, TRAM spans 378 to 441 (ESMIGSKQKI…PNSLRGRLLE (64 aa)).

Belongs to the methylthiotransferase family. MiaB subfamily. Monomer. Requires [4Fe-4S] cluster as cofactor.

The protein localises to the cytoplasm. The enzyme catalyses N(6)-dimethylallyladenosine(37) in tRNA + (sulfur carrier)-SH + AH2 + 2 S-adenosyl-L-methionine = 2-methylsulfanyl-N(6)-dimethylallyladenosine(37) in tRNA + (sulfur carrier)-H + 5'-deoxyadenosine + L-methionine + A + S-adenosyl-L-homocysteine + 2 H(+). Its function is as follows. Catalyzes the methylthiolation of N6-(dimethylallyl)adenosine (i(6)A), leading to the formation of 2-methylthio-N6-(dimethylallyl)adenosine (ms(2)i(6)A) at position 37 in tRNAs that read codons beginning with uridine. This chain is tRNA-2-methylthio-N(6)-dimethylallyladenosine synthase, found in Legionella pneumophila (strain Paris).